A 1035-amino-acid chain; its full sequence is Integrin alpha-9 (1035 aa).

Positions 1 to 29 are cleaved as a signal peptide; sequence MGGPAAPRGAGRLRALLLALVVAGIPAGA. Residues 30 to 981 lie on the Extracellular side of the membrane; the sequence is YNLDPQRPVH…LEPRGYVVGW (952 aa). FG-GAP repeat units follow at residues 35–96, 111–174, 182–232, 233–289, 290–349, 351–408, and 411–474; these read QRPV…PDRR, SCGK…AKGR, EYKK…NTYL, KLND…SGTL, IKIF…GALE, QLAL…GIVP, and SMKL…LPGS. 3 disulfides stabilise this stretch: cysteine 87–cysteine 97, cysteine 142–cysteine 162, and cysteine 179–cysteine 194. Residue asparagine 225 is glycosylated (N-linked (GlcNAc...) asparagine). Aspartate 312, asparagine 314, aspartate 316, aspartate 320, aspartate 373, aspartate 375, aspartate 377, aspartate 381, aspartate 435, aspartate 437, asparagine 439, and aspartate 443 together coordinate Ca(2+). Asparagine 476 is a glycosylation site (N-linked (GlcNAc...) asparagine). A disulfide bridge connects residues cysteine 482 and cysteine 491. Asparagine 493 carries an N-linked (GlcNAc...) asparagine glycan. Cysteine 497 and cysteine 555 form a disulfide bridge. The N-linked (GlcNAc...) asparagine glycan is linked to asparagine 612. Residues cysteine 620 and cysteine 625 are joined by a disulfide bond. N-linked (GlcNAc...) asparagine glycans are attached at residues asparagine 654, asparagine 658, asparagine 672, and asparagine 676. Cysteine 696 and cysteine 706 form a disulfide bridge. N-linked (GlcNAc...) asparagine glycosylation is found at asparagine 807 and asparagine 854. 2 disulfide bridges follow: cysteine 855–cysteine 891 and cysteine 898–cysteine 903. Residue asparagine 904 is glycosylated (N-linked (GlcNAc...) asparagine). A helical membrane pass occupies residues 982–1002; it reads IIAISLLVGILIFLLLAVLLW. The Cytoplasmic segment spans residues 1003–1035; sequence KMGFFRRRYKEIIEAEKNRKENEDSWDWVQKNQ. The short motif at 1005–1009 is the GFFKR motif element; the sequence is GFFRR.

This sequence belongs to the integrin alpha chain family. In terms of assembly, heterodimer of an alpha and a beta subunit. Alpha-9 (ITGA9) associates with beta-1 (ITGB1). Integrin ITGA9:ITGB1 interacts with FBLN5 (via N-terminus). Integrin ITGA9:ITGB1 interacts with SPP1/OPN (via N-terminus). Integrin ITGA9:ITGB1 interacts with TNC/TNFN3 (via the 3rd Fibronectin type-III domain). Integrin ITGA9:ITGB1 interacts with SVEP1/polydom (via Sushi domain 21); thereby inhibits Ca(2+) intracellular signaling and as a result represses vasocontraction. In terms of tissue distribution, expressed in vascular smooth muscle cells (at protein level). Expressed in the airway epithelium (at protein level).

It localises to the membrane. Integrin alpha-9/beta-1 (ITGA9:ITGB1) is a receptor for VCAM1, cytotactin and osteopontin. It recognizes the sequence A-E-I-D-G-I-E-L in cytotactin. ITGA9:ITGB1 may play a crucial role in SVEP1/polydom-mediated myoblast cell adhesion. Integrin ITGA9:ITGB1 represses PRKCA-mediated L-type voltage-gated channel Ca(2+) influx and ROCK-mediated calcium sensitivity in vascular smooth muscle cells via its interaction with SVEP1, thereby inhibiting vasocontraction. The chain is Integrin alpha-9 (ITGA9) from Homo sapiens (Human).